Here is a 256-residue protein sequence, read N- to C-terminus: uncharacterized protein (256 aa).

NADP(+) is bound at residue 9 to 33 (VTGGGQGIGAAIAQLFAENGMKVVI). S140 provides a ligand contact to substrate. Y153 serves as the catalytic Proton acceptor.

This sequence belongs to the short-chain dehydrogenases/reductases (SDR) family.

This is an uncharacterized protein from Thermotoga maritima (strain ATCC 43589 / DSM 3109 / JCM 10099 / NBRC 100826 / MSB8).